A 377-amino-acid polypeptide reads, in one-letter code: Putative zinc metalloprotease Atu1380 (377 aa).

His-29 contacts Zn(2+). Glu-30 is a catalytic residue. Residue His-33 participates in Zn(2+) binding. The next 3 helical transmembrane spans lie at 118–140 (VAAG…FGIY), 299–321 (LGIS…LNLM), and 351–373 (VAFR…NDIS). In terms of domain architecture, PDZ spans 129 to 202 (AILIFAVLFG…TPITVTVERA (74 aa)).

It belongs to the peptidase M50B family. Zn(2+) serves as cofactor.

It is found in the cell inner membrane. In Agrobacterium fabrum (strain C58 / ATCC 33970) (Agrobacterium tumefaciens (strain C58)), this protein is Putative zinc metalloprotease Atu1380.